The primary structure comprises 420 residues: Glycogen synthase kinase-3 beta (420 aa).

The segment covering methionine 1–alanine 22 has biased composition (polar residues). A disordered region spans residues methionine 1–glutamate 53. A Phosphoserine; by PKB/AKT1, RPS6KA3 and SGK3 modification is found at serine 9. Cysteine 14 carries S-palmitoyl cysteine lipidation. A Protein kinase domain is found at tyrosine 56–phenylalanine 340. ATP is bound by residues isoleucine 62–valine 70 and lysine 85. The Proton acceptor role is filled by aspartate 181. Position 216 is a phosphotyrosine (tyrosine 216). The interval glutamine 385–threonine 420 is disordered. Low complexity-rich tracts occupy residues alanine 386 to asparagine 401 and asparagine 409 to threonine 420. Serine 389 is modified (phosphoserine).

The protein belongs to the protein kinase superfamily. CMGC Ser/Thr protein kinase family. GSK-3 subfamily. In terms of assembly, monomer. Interacts with DAB2IP (via C2 domain); the interaction stimulates GSK3B kinase activation. Interacts (via C2 domain) with PPP2CA. Interacts with ARRB2, AXIN1, CABYR, DISC1, MMP2, MUC1, NIN, PRUNE1 and ZBED3. Interacts with AXIN1; the interaction mediates hyperphosphorylation of CTNNB1 leading to its ubiquitination and destruction. Interacts with and phosphorylates SNAI1. Interacts with DNM1L (via a C-terminal domain). Found in a complex composed of MACF1, APC, AXIN1, CTNNB1 and GSK3B. Interacts with SGK3. Interacts with the CLOCK-BMAL1 heterodimer. Interacts with the BMAL1. Interacts with CTNND2. The complex composed, at least, of APC, CTNNB1 and GSK3B interacts with JPT1; the interaction requires the inactive form of GSK3B (phosphorylated at 'Ser-9'). Forms a complex composed of PRKAR2A or PRKAR2B, GSK3B and GSKIP through GSKIP interaction; facilitates PKA-induced phosphorylation and regulates GSK3B activity. Interacts with GSKIP. Interacts with GID8. Interacts with PIWIL2. Interacts with LMBR1L. Interacts with DDX3X. Interacts with BIRC2. Interacts with TNFRSF10B; TNFRSF10B stimulation inhibits GSK3B kinase activity. Found in a complex with SLC39A6, SLC39A10 and with GSK3B that controls NCAM1 phosphorylation. Interacts with PKP3 (via ARM repeats); the interaction may be involved in PKP3 protein degradation. In terms of processing, phosphorylated by AKT1 and ILK1. Upon insulin-mediated signaling, the activated PKB/AKT1 and RPS6KA3 protein kinases phosphorylate and deactivate GSK3B, resulting in the dephosphorylation and activation of GYS1. Activated by phosphorylation at Tyr-216. Inactivated by phosphorylation at Ser-9. Phosphorylated in a circadian manner in the hippocampus. Post-translationally, mono-ADP-ribosylation by PARP10 negatively regulates kinase activity. Palmitoylated. Palmitoylation by ZDHHC4 prevents AKT1-mediated phosphorylation.

It is found in the cytoplasm. The protein resides in the nucleus. Its subcellular location is the membrane. The protein localises to the cell membrane. It catalyses the reaction L-seryl-[tau protein] + ATP = O-phospho-L-seryl-[tau protein] + ADP + H(+). The catalysed reaction is L-threonyl-[tau protein] + ATP = O-phospho-L-threonyl-[tau protein] + ADP + H(+). The enzyme catalyses L-seryl-[protein] + ATP = O-phospho-L-seryl-[protein] + ADP + H(+). It carries out the reaction L-threonyl-[protein] + ATP = O-phospho-L-threonyl-[protein] + ADP + H(+). With respect to regulation, activated by phosphorylation at Tyr-216. In response to insulin, inhibited by phosphorylation at Ser-9 by PKB/AKT1; phosphorylation at this site causes a conformational change, preventing access of substrates to the active site. Inhibited by IL22 treatment which also triggers phosphorylation at Ser-9, promoting inactivation. Inhibited by lithium. Constitutively active protein kinase that acts as a negative regulator in the hormonal control of glucose homeostasis, Wnt signaling and regulation of transcription factors and microtubules, by phosphorylating and inactivating glycogen synthase (GYS1 or GYS2), EIF2B, CTNNB1/beta-catenin, APC, AXIN1, DPYSL2/CRMP2, JUN, NFATC1/NFATC, MAPT/TAU and MACF1. Requires primed phosphorylation of the majority of its substrates. In skeletal muscle, contributes to insulin regulation of glycogen synthesis by phosphorylating and inhibiting GYS1 activity and hence glycogen synthesis. May also mediate the development of insulin resistance by regulating activation of transcription factors. Regulates protein synthesis by controlling the activity of initiation factor 2B (EIF2BE/EIF2B5) in the same manner as glycogen synthase. In Wnt signaling, GSK3B forms a multimeric complex with APC, AXIN1 and CTNNB1/beta-catenin and phosphorylates the N-terminus of CTNNB1 leading to its degradation mediated by ubiquitin/proteasomes. Phosphorylates JUN at sites proximal to its DNA-binding domain, thereby reducing its affinity for DNA. Phosphorylates NFATC1/NFATC on conserved serine residues promoting NFATC1/NFATC nuclear export, shutting off NFATC1/NFATC gene regulation, and thereby opposing the action of calcineurin. Phosphorylates MAPT/TAU on 'Thr-548', decreasing significantly MAPT/TAU ability to bind and stabilize microtubules. MAPT/TAU is the principal component of neurofibrillary tangles in Alzheimer disease. Plays an important role in ERBB2-dependent stabilization of microtubules at the cell cortex. Phosphorylates MACF1, inhibiting its binding to microtubules which is critical for its role in bulge stem cell migration and skin wound repair. Probably regulates NF-kappa-B (NFKB1) at the transcriptional level and is required for the NF-kappa-B-mediated anti-apoptotic response to TNF-alpha (TNF/TNFA). Negatively regulates replication in pancreatic beta-cells, resulting in apoptosis, loss of beta-cells and diabetes. Through phosphorylation of the anti-apoptotic protein MCL1, may control cell apoptosis in response to growth factors deprivation. Phosphorylates MUC1 in breast cancer cells, decreasing the interaction of MUC1 with CTNNB1/beta-catenin. Is necessary for the establishment of neuronal polarity and axon outgrowth. Phosphorylates MARK2, leading to inhibition of its activity. Phosphorylates SIK1 at 'Thr-182', leading to sustainment of its activity. Phosphorylates ZC3HAV1 which enhances its antiviral activity. Phosphorylates SNAI1, leading to its ubiquitination and proteasomal degradation. Phosphorylates SFPQ at 'Thr-687' upon T-cell activation. Phosphorylates NR1D1 st 'Ser-55' and 'Ser-59' and stabilizes it by protecting it from proteasomal degradation. Regulates the circadian clock via phosphorylation of the major clock components including BMAL1, CLOCK and PER2. Phosphorylates CLOCK AT 'Ser-427' and targets it for proteasomal degradation. Phosphorylates BMAL1 at 'Ser-17' and 'Ser-21' and primes it for ubiquitination and proteasomal degradation. Phosphorylates FBXL2 at 'Thr-404' and primes it for ubiquitination by the SCF(FBXO3) complex and proteasomal degradation. Phosphorylates OGT at 'Ser-3' or 'Ser-4' which positively regulates its activity. Phosphorylates MYCN in neuroblastoma cells which may promote its degradation. Regulates the circadian rhythmicity of hippocampal long-term potentiation and BMAL1 and PER2 expression. Acts as a regulator of autophagy by mediating phosphorylation of KAT5/TIP60 under starvation conditions, activating KAT5/TIP60 acetyltransferase activity and promoting acetylation of key autophagy regulators, such as ULK1 and RUBCNL/Pacer. Negatively regulates extrinsic apoptotic signaling pathway via death domain receptors. Promotes the formation of an anti-apoptotic complex, made of DDX3X, BRIC2 and GSK3B, at death receptors, including TNFRSF10B. The anti-apoptotic function is most effective with weak apoptotic signals and can be overcome by stronger stimulation. Phosphorylates E2F1, promoting the interaction between E2F1 and USP11, stabilizing E2F1 and promoting its activity. Phosphorylates mTORC2 complex component RICTOR at 'Ser-1235' in response to endoplasmic stress, inhibiting mTORC2. Phosphorylates FXR1, promoting FXR1 ubiquitination by the SCF(FBXO4) complex and FXR1 degradation by the proteasome. Phosphorylates interleukin-22 receptor subunit IL22RA1, preventing its proteasomal degradation. In Rattus norvegicus (Rat), this protein is Glycogen synthase kinase-3 beta.